The sequence spans 184 residues: Peptide deformylase 2 (184 aa).

Fe cation-binding residues include Cys110 and His153. The active site involves Glu154. His157 lines the Fe cation pocket.

The protein belongs to the polypeptide deformylase family. Fe(2+) is required as a cofactor.

It catalyses the reaction N-terminal N-formyl-L-methionyl-[peptide] + H2O = N-terminal L-methionyl-[peptide] + formate. Functionally, removes the formyl group from the N-terminal Met of newly synthesized proteins. Requires at least a dipeptide for an efficient rate of reaction. N-terminal L-methionine is a prerequisite for activity but the enzyme has broad specificity at other positions. The protein is Peptide deformylase 2 of Bacillus anthracis.